A 212-amino-acid chain; its full sequence is Cyclin-dependent kinase inhibitor 3 (212 aa).

The span at 1-12 shows a compositional bias: polar residues; sequence MKPPSSIQTSEF. The interval 1–23 is disordered; the sequence is MKPPSSIQTSEFDSSDEEPIEDE. Residues 1 to 34 are interaction with CDK2; that stretch reads MKPPSSIQTSEFDSSDEEPIEDEQTPIQISWLPL. Over residues 13 to 23 the composition is skewed to acidic residues; sequence DSSDEEPIEDE. One can recognise a Tyrosine-protein phosphatase domain in the interval 32–201; sequence LPLSRVNYSQ…FRDKLAAHLS (170 aa). Catalysis depends on C140, which acts as the Phosphocysteine intermediate.

The protein belongs to the protein-tyrosine phosphatase family. In terms of assembly, interacts with cyclin-dependent kinases such as CDK1, CDK2 and CDK3. Does not interact with CDK4. Interacts (via C-terminus) with phosphorylated CDK2 (via C-terminal helix). Interacts with MS4A3 (via C-terminus); the interaction enhances CDKN3 enzymatic activity.

Its subcellular location is the cytoplasm. The protein localises to the perinuclear region. The catalysed reaction is O-phospho-L-tyrosyl-[protein] + H2O = L-tyrosyl-[protein] + phosphate. The enzyme catalyses O-phospho-L-seryl-[protein] + H2O = L-seryl-[protein] + phosphate. It carries out the reaction O-phospho-L-threonyl-[protein] + H2O = L-threonyl-[protein] + phosphate. May play a role in cell cycle regulation. Dual specificity phosphatase active toward substrates containing either phosphotyrosine or phosphoserine residues. Dephosphorylates CDK2 at 'Thr-160' in a cyclin-dependent manner. The chain is Cyclin-dependent kinase inhibitor 3 from Sus scrofa (Pig).